A 209-amino-acid polypeptide reads, in one-letter code: Uracil phosphoribosyltransferase (209 aa).

5-phospho-alpha-D-ribose 1-diphosphate contacts are provided by residues Arg-79, Arg-104, and 131–139; that span reads DPMLATGNS. Residues Ile-194 and 199 to 201 each bind uracil; that span reads GDA. Asp-200 lines the 5-phospho-alpha-D-ribose 1-diphosphate pocket.

This sequence belongs to the UPRTase family. It depends on Mg(2+) as a cofactor.

The catalysed reaction is UMP + diphosphate = 5-phospho-alpha-D-ribose 1-diphosphate + uracil. Its pathway is pyrimidine metabolism; UMP biosynthesis via salvage pathway; UMP from uracil: step 1/1. With respect to regulation, allosterically activated by GTP. Its function is as follows. Catalyzes the conversion of uracil and 5-phospho-alpha-D-ribose 1-diphosphate (PRPP) to UMP and diphosphate. The sequence is that of Uracil phosphoribosyltransferase from Agrobacterium fabrum (strain C58 / ATCC 33970) (Agrobacterium tumefaciens (strain C58)).